A 344-amino-acid chain; its full sequence is Aurora kinase B (344 aa).

Thr-35 carries the post-translational modification Phosphothreonine. The segment at 46 to 65 is disordered; the sequence is NAQPTAAPGQKVVENSSGTP. Phosphoserine is present on Ser-62. A Phosphothreonine modification is found at Thr-64. The region spanning 77–327 is the Protein kinase domain; sequence FEIGRPLGKG…LAQVSAHPWV (251 aa). ATP is bound by residues 83-91 and Lys-106; that span reads LGKGKFGNV. Asp-200 functions as the Proton acceptor in the catalytic mechanism. Lys-215 carries the post-translational modification N6-acetyllysine. At Ser-227 the chain carries Phosphoserine. A Phosphothreonine; by autocatalysis modification is found at Thr-232.

This sequence belongs to the protein kinase superfamily. Ser/Thr protein kinase family. Aurora subfamily. As to quaternary structure, component of the chromosomal passenger complex (CPC) composed of at least BIRC5/survivin, CDCA8/borealin, INCENP, AURKB or AURKC; predominantly independent AURKB- and AURKC-containing complexes exist. Associates with RACGAP1 during M phase. Interacts with SPDYC; this interaction may be required for proper localization of active, Thr-232-phosphorylated AURKB form during prometaphase and metaphase. Interacts with p53/TP53. Interacts (via the middle kinase domain) with NOC2L (via the N- and C-terminus domains). Interacts with CDCA1. Interacts with EVI5. Interacts with JTB. Interacts with NDC80. Interacts with PSMA3. Interacts with RNF2/RING1B. Interacts with SEPTIN1. Interacts with SIRT2. Interacts with TACC1. Interacts with TTC28. Post-translationally, the phosphorylation of Thr-232 requires the binding to INCENP and occurs by means of an autophosphorylation mechanism. Thr-232 phosphorylation is indispensable for the AURKB kinase activity. Acetylated at Lys-215 by KAT5 at kinetochores, increasing AURKB activity and promoting accurate chromosome segregation in mitosis. In terms of processing, ubiquitinated by different BCR (BTB-CUL3-RBX1) E3 ubiquitin ligase complexes. Ubiquitinated by the BCR(KLHL9-KLHL13) E3 ubiquitin ligase complex, ubiquitination leads to removal from mitotic chromosomes and is required for cytokinesis. During anaphase, the BCR(KLHL21) E3 ubiquitin ligase complex recruits the CPC complex from chromosomes to the spindle midzone and mediates the ubiquitination of AURKB. Ubiquitination of AURKB by BCR(KLHL21) E3 ubiquitin ligase complex may not lead to its degradation by the proteasome. Deubiquitinated by USP35; inhibiting CDH1-mediated degradation of AURKB.

The protein resides in the nucleus. The protein localises to the chromosome. Its subcellular location is the centromere. It localises to the kinetochore. It is found in the cytoplasm. The protein resides in the cytoskeleton. The protein localises to the spindle. Its subcellular location is the midbody. The catalysed reaction is L-seryl-[protein] + ATP = O-phospho-L-seryl-[protein] + ADP + H(+). It catalyses the reaction L-threonyl-[protein] + ATP = O-phospho-L-threonyl-[protein] + ADP + H(+). With respect to regulation, activity is greatly increased when AURKB is within the CPC complex. In particular, AURKB-phosphorylated INCENP acts as an activator of AURKB. Positive feedback between HASPIN and AURKB contributes to CPC localization. Functionally, serine/threonine-protein kinase component of the chromosomal passenger complex (CPC), a complex that acts as a key regulator of mitosis. The CPC complex has essential functions at the centromere in ensuring correct chromosome alignment and segregation and is required for chromatin-induced microtubule stabilization and spindle assembly. Involved in the bipolar attachment of spindle microtubules to kinetochores and is a key regulator for the onset of cytokinesis during mitosis. Required for central/midzone spindle assembly and cleavage furrow formation. Key component of the cytokinesis checkpoint, a process required to delay abscission to prevent both premature resolution of intercellular chromosome bridges and accumulation of DNA damage: phosphorylates CHMP4C, leading to retain abscission-competent VPS4 (VPS4A and/or VPS4B) at the midbody ring until abscission checkpoint signaling is terminated at late cytokinesis. AURKB phosphorylates the CPC complex subunits BIRC5/survivin, CDCA8/borealin and INCENP. Phosphorylation of INCENP leads to increased AURKB activity. Other known AURKB substrates involved in centromeric functions and mitosis are CENPA, DES/desmin, GPAF, KIF2C, NSUN2, RACGAP1, SEPTIN1, VIM/vimentin, HASPIN, and histone H3. A positive feedback loop involving HASPIN and AURKB contributes to localization of CPC to centromeres. Phosphorylation of VIM controls vimentin filament segregation in cytokinetic process, whereas histone H3 is phosphorylated at 'Ser-10' and 'Ser-28' during mitosis (H3S10ph and H3S28ph, respectively). AURKB is also required for kinetochore localization of BUB1 and SGO1. Phosphorylation of p53/TP53 negatively regulates its transcriptional activity. Key regulator of active promoters in resting B- and T-lymphocytes: acts by mediating phosphorylation of H3S28ph at active promoters in resting B-cells, inhibiting RNF2/RING1B-mediated ubiquitination of histone H2A and enhancing binding and activity of the USP16 deubiquitinase at transcribed genes. Acts as an inhibitor of CGAS during mitosis: catalyzes phosphorylation of the N-terminus of CGAS during the G2-M transition, blocking CGAS liquid phase separation and activation, and thereby preventing CGAS-induced autoimmunity. Phosphorylates KRT5 during anaphase and telophase. Phosphorylates ATXN10 which promotes phosphorylation of ATXN10 by PLK1 and may play a role in the regulation of cytokinesis and stimulating the proteasomal degradation of ATXN10. This chain is Aurora kinase B (AURKB), found in Bos taurus (Bovine).